Here is a 459-residue protein sequence, read N- to C-terminus: Cysteine--tRNA ligase (459 aa).

A Zn(2+)-binding site is contributed by Cys-29. The 'HIGH' region signature appears at 31-41 (MTVYDLCHLGH). Zn(2+) is bound by residues Cys-213, His-238, and Glu-242. Positions 270 to 274 (KMSKS) match the 'KMSKS' region motif. Lys-273 contacts ATP.

The protein belongs to the class-I aminoacyl-tRNA synthetase family. Monomer. Zn(2+) serves as cofactor.

It is found in the cytoplasm. It carries out the reaction tRNA(Cys) + L-cysteine + ATP = L-cysteinyl-tRNA(Cys) + AMP + diphosphate. The chain is Cysteine--tRNA ligase from Variovorax paradoxus (strain S110).